Reading from the N-terminus, the 416-residue chain is Formyl-CoA:oxalate CoA-transferase (416 aa).

CoA is bound by residues 17 to 18 (QS), R38, 72 to 75 (LNTK), 96 to 98 (NFH), H104, and 137 to 140 (KAYE). Catalysis depends on D169, which acts as the Nucleophile. 248–250 (GGQ) contributes to the substrate binding site. A CoA-binding site is contributed by 273 to 275 (QEQ).

This sequence belongs to the CoA-transferase III family. Frc subfamily. Homodimer.

It carries out the reaction formyl-CoA + oxalate = oxalyl-CoA + formate. It participates in metabolic intermediate degradation; oxalate degradation; CO(2) and formate from oxalate: step 1/2. In terms of biological role, involved in the catabolism of oxalate and in the adapatation to low pH via the induction of the oxalate-dependent acid tolerance response (ATR). Catalyzes the transfer of the CoA moiety from formyl-CoA to oxalate. This Escherichia coli (strain ATCC 8739 / DSM 1576 / NBRC 3972 / NCIMB 8545 / WDCM 00012 / Crooks) protein is Formyl-CoA:oxalate CoA-transferase.